The sequence spans 417 residues: Serine hydroxymethyltransferase (417 aa).

(6S)-5,6,7,8-tetrahydrofolate is bound by residues Leu-119 and 123–125 (GHL). An N6-(pyridoxal phosphate)lysine modification is found at Lys-227.

Belongs to the SHMT family. In terms of assembly, homodimer. The cofactor is pyridoxal 5'-phosphate.

It localises to the cytoplasm. It carries out the reaction (6R)-5,10-methylene-5,6,7,8-tetrahydrofolate + glycine + H2O = (6S)-5,6,7,8-tetrahydrofolate + L-serine. The protein operates within one-carbon metabolism; tetrahydrofolate interconversion. It functions in the pathway amino-acid biosynthesis; glycine biosynthesis; glycine from L-serine: step 1/1. Functionally, catalyzes the reversible interconversion of serine and glycine with tetrahydrofolate (THF) serving as the one-carbon carrier. This reaction serves as the major source of one-carbon groups required for the biosynthesis of purines, thymidylate, methionine, and other important biomolecules. Also exhibits THF-independent aldolase activity toward beta-hydroxyamino acids, producing glycine and aldehydes, via a retro-aldol mechanism. The sequence is that of Serine hydroxymethyltransferase from Buchnera aphidicola subsp. Cinara cedri (strain Cc).